A 344-amino-acid chain; its full sequence is Coproporphyrin III ferrochelatase (344 aa).

Residue Ser-52 coordinates Fe-coproporphyrin III. Cys-113 serves as a coordination point for [2Fe-2S] cluster. A Fe-coproporphyrin III-binding site is contributed by Tyr-116. Fe(2+) is bound by residues His-172 and Glu-255. 3 residues coordinate [2Fe-2S] cluster: Cys-316, Cys-325, and Cys-330.

The protein belongs to the ferrochelatase family. Requires [2Fe-2S] cluster as cofactor.

It is found in the cytoplasm. It catalyses the reaction Fe-coproporphyrin III + 2 H(+) = coproporphyrin III + Fe(2+). It participates in porphyrin-containing compound metabolism; protoheme biosynthesis. Involved in coproporphyrin-dependent heme b biosynthesis. Catalyzes the insertion of ferrous iron into coproporphyrin III to form Fe-coproporphyrin III. In Mycobacterium bovis (strain ATCC BAA-935 / AF2122/97), this protein is Coproporphyrin III ferrochelatase.